The following is a 370-amino-acid chain: MPHQQILMLFGLLPVATNISTWWNFGSMLIACSTLQVLTGFFLAVHYTANINLAFSSIIHITRDVPYGWLMQNLHAIGASMFFICIYIHIARGLYYGSYLNKETWLSGTTLLIMLMATAFFGYVLPWGQMSFWAATVITNLLTAIPYLGTTMTTWLWGGFAINDPTLTRFFALHFILPFGIISMSSLHVMLLHEEGSSNPLGTNSDIDKIPFHPYHTYKDLLMLAAMTTLLLLIVSFSPDIFNDPDNFSKANPLVTPQRIKPEWYFLFAYGILRSIPNKLGGALALTMSIVILLTVPFTHTSKMRSMMFRPFMQMTFWLFAATFMVITWTATKPVEPPFTLIGQAASMIYFLFFISNPIMGWLENKIMKM.

4 consecutive transmembrane segments (helical) span residues 25–45 (FGSM…FLAV), 69–90 (WLMQ…YIHI), 105–125 (WLSG…GYVL), and 170–190 (FFAL…LHVM). Heme b contacts are provided by His-75 and His-89. Heme b-binding residues include His-174 and His-188. Position 193 (His-193) interacts with a ubiquinone. Transmembrane regions (helical) follow at residues 218–238 (YKDL…VSFS), 280–300 (LGGA…PFTH), 312–332 (FMQM…WTAT), and 339–358 (FTLI…ISNP).

It belongs to the cytochrome b family. In terms of assembly, the cytochrome bc1 complex contains 3 respiratory subunits (MT-CYB, CYC1 and UQCRFS1), 2 core proteins (UQCRC1 and UQCRC2) and probably 6 low-molecular weight proteins. The cofactor is heme b.

Its subcellular location is the mitochondrion inner membrane. Its function is as follows. Component of the ubiquinol-cytochrome c reductase complex (complex III or cytochrome b-c1 complex) that is part of the mitochondrial respiratory chain. The b-c1 complex mediates electron transfer from ubiquinol to cytochrome c. Contributes to the generation of a proton gradient across the mitochondrial membrane that is then used for ATP synthesis. The polypeptide is Cytochrome b (MT-CYB) (Eunectes notaeus (Yellow anaconda)).